The sequence spans 345 residues: IGF-like family receptor 1 (345 aa).

The signal sequence occupies residues 1–20; it reads MGPSWLLWTVAVAVLLLTRA. Residues 21–163 lie on the Extracellular side of the membrane; that stretch reads ASMEASSFCG…SSRPGFVSAS (143 aa). Asparagine 87 is a glycosylation site (N-linked (GlcNAc...) asparagine). The segment at 106–149 is disordered; the sequence is VESPGRTHKQCRKKPVPPKDVCPLKPEDAGASSSPGRWSLGQTT. The segment covering 111-121 has biased composition (basic residues); the sequence is RTHKQCRKKPV. Over residues 136–149 the composition is skewed to polar residues; sequence ASSSPGRWSLGQTT. The helical transmembrane segment at 164–184 threads the bilayer; the sequence is VLPLAVLPLLLVLLLILAVVL. Topologically, residues 185–345 are cytoplasmic; the sequence is LSLFKRKVRS…DALQVLSKLG (161 aa).

In terms of tissue distribution, ubiquitously expressed with higher expression in lymph node. Highly expressed in T-cells and monocytes.

The protein resides in the cell membrane. Probable cell membrane receptor for the IGF-like family protein IGFL. In Mus musculus (Mouse), this protein is IGF-like family receptor 1 (Igflr1).